Here is a 162-residue protein sequence, read N- to C-terminus: EF-hand calcium-binding domain-containing protein 11 (162 aa).

EF-hand domains are found at residues 18 to 53 (SERRKWVEVFKACDEDNKGYLSREDFKVAIVMLFGY), 91 to 126 (LYRNEIRHIFTAFDVHYRGFLTLEDFKRAFSQVAPK), and 127 to 162 (LPSRTVLEVFREADQDSDGHVSFRDFEYAMNHGKAK). Ca(2+) is bound by residues aspartate 140, aspartate 142, aspartate 144, histidine 146, and aspartate 151.

This chain is EF-hand calcium-binding domain-containing protein 11 (Efcab11), found in Rattus norvegicus (Rat).